A 158-amino-acid polypeptide reads, in one-letter code: Single-stranded DNA-binding protein 2 (158 aa).

The 107-residue stretch at 1 to 107 folds into the SSB domain; the sequence is MNETIVCVVG…IDALAVGHDL (107 aa). The segment at 109–158 is disordered; it reads RGTSAFRRPSAKDGEAGVSPAARPEPNWETEPGSQPSVEHQPQPEPAGVT.

In terms of assembly, homotetramer.

This Streptomyces avermitilis (strain ATCC 31267 / DSM 46492 / JCM 5070 / NBRC 14893 / NCIMB 12804 / NRRL 8165 / MA-4680) protein is Single-stranded DNA-binding protein 2 (ssb2).